Consider the following 418-residue polypeptide: Serine hydroxymethyltransferase (418 aa).

(6S)-5,6,7,8-tetrahydrofolate contacts are provided by residues leucine 121 and 125-127 (GHL). Position 230 is an N6-(pyridoxal phosphate)lysine (lysine 230). 355-357 (SPF) serves as a coordination point for (6S)-5,6,7,8-tetrahydrofolate.

Belongs to the SHMT family. As to quaternary structure, homodimer. It depends on pyridoxal 5'-phosphate as a cofactor.

It is found in the cytoplasm. The enzyme catalyses (6R)-5,10-methylene-5,6,7,8-tetrahydrofolate + glycine + H2O = (6S)-5,6,7,8-tetrahydrofolate + L-serine. Its pathway is one-carbon metabolism; tetrahydrofolate interconversion. It functions in the pathway amino-acid biosynthesis; glycine biosynthesis; glycine from L-serine: step 1/1. Functionally, catalyzes the reversible interconversion of serine and glycine with tetrahydrofolate (THF) serving as the one-carbon carrier. This reaction serves as the major source of one-carbon groups required for the biosynthesis of purines, thymidylate, methionine, and other important biomolecules. Also exhibits THF-independent aldolase activity toward beta-hydroxyamino acids, producing glycine and aldehydes, via a retro-aldol mechanism. This chain is Serine hydroxymethyltransferase, found in Streptococcus pneumoniae (strain P1031).